A 2221-amino-acid chain; its full sequence is Voltage-dependent L-type calcium channel subunit alpha-1C (2221 aa).

A disordered region spans residues 1–20 (MVNENTRMYIPEENHQGSNY). Topologically, residues 1-124 (MVNENTRMYI…RACISIVEWK (124 aa)) are cytoplasmic. The calmodulin-binding stretch occupies residues 47 to 68 (GAALSWQAAIDAARQAKLMGSA). Residues 73–98 (ISTVSSTQRKRQQYGKPKKQGSTTAT) are disordered. Residues 80 to 91 (QRKRQQYGKPKK) are compositionally biased toward basic residues. Residues 111–408 (NPIRRACISI…LVLGVLSGEF (298 aa)) form an I repeat. Residues 125 to 143 (PFEIIILLTIFANCVALAI) form a helical membrane-spanning segment. The Extracellular segment spans residues 144–158 (YIPFPEDDSNATNSN). An N-linked (GlcNAc...) asparagine glycan is attached at asparagine 153. A helical membrane pass occupies residues 159–179 (LERVEYLFLIIFTVEAFLKVI). Residues 180–188 (AYGLLFHPN) are Cytoplasmic-facing. The helical transmembrane segment at 189–209 (AYLRNGWNLLDFIIVVVGLFS) threads the bilayer. At 210-232 (AILEQATKADGANALGGKGAGFD) the chain is on the extracellular side. Residues 233–251 (VKALRAFRVLRPLRLVSGV) form a helical membrane-spanning segment. The Cytoplasmic segment spans residues 252 to 268 (PSLQVVLNSIIKAMVPL). The chain crosses the membrane as a helical span at residues 269-290 (LHIALLVLFVIIIYAIIGLELF). The Extracellular portion of the chain corresponds to 291-350 (MGKMHKTCYNQEGIADVPAEDDPSPCALETGHGRQCQNGTVCKPGWDGPKHGITNFDNFA). 2 cysteine pairs are disulfide-bonded: cysteine 298/cysteine 326 and cysteine 316/cysteine 332. An N-linked (GlcNAc...) asparagine glycan is attached at asparagine 328. An intramembrane region (pore-forming) is located at residues 351 to 372 (FAMLTVFQCITMEGWTDVLYWV). The Selectivity filter of repeat I signature appears at 361–364 (TMEG). Glutamate 363 lines the Ca(2+) pocket. Over 373–380 (NDAVGRDW) the chain is Extracellular. Residues 381-401 (PWIYFVTLIIIGSFFVLNLVL) traverse the membrane as a helical segment. Over 402-524 (GVLSGEFSKE…RKCRAAVKSN (123 aa)) the chain is Cytoplasmic. The AID/alpha-interaction domain; mediates interaction with the beta subunit stretch occupies residues 428–445 (QQLEEDLKGYLDWITQAE). Positions 449–481 (PENEDEGMDEEKPRNMSMPTSETESVNTENVAG) are disordered. Residues 465-478 (SMPTSETESVNTEN) show a composition bias toward polar residues. Phosphoserine is present on serine 469. A Phosphothreonine modification is found at threonine 476. One copy of the II repeat lies at 510 to 756 (NRFCRRKCRA…VFLAIAVDNL (247 aa)). Residues 525-543 (VFYWLVIFLVFLNTLTIAS) form a helical membrane-spanning segment. Residues 544–554 (EHYNQPNWLTE) lie on the Extracellular side of the membrane. The helical transmembrane segment at 555 to 575 (VQDTANKALLALFTAEMLLKM) threads the bilayer. At 576-586 (YSLGLQAYFVS) the chain is on the cytoplasmic side. Residues 587–606 (LFNRFDCFVVCGGILETILV) traverse the membrane as a helical segment. At 607 to 615 (ETKIMSPLG) the chain is on the extracellular side. A helical transmembrane segment spans residues 616-634 (ISVLRCVRLLRIFKITRYW). The Cytoplasmic segment spans residues 635-653 (NSLSNLVASLLNSVRSIAS). Residues 654 to 673 (LLLLLFLFIIIFSLLGMQLF) traverse the membrane as a helical segment. The Extracellular portion of the chain corresponds to 674–693 (GGKFNFDEMQTRRSTFDNFP). The segment at residues 694–715 (QSLLTVFQILTGEDWNSVMYDG) is an intramembrane region (pore-forming). The short motif at 704–707 (TGED) is the Selectivity filter of repeat II element. A Ca(2+)-binding site is contributed by glutamate 706. Residues 716 to 725 (IMAYGGPSFP) lie on the Extracellular side of the membrane. A helical transmembrane segment spans residues 726 to 745 (GMLVCIYFIILFICGNYILL). Topologically, residues 746 to 900 (NVFLAIAVDN…LQCHRIVNDT (155 aa)) are cytoplasmic. Residues 764–861 (SAQKEEEEEK…EMPVGPRPRP (98 aa)) are disordered. Residues 783 to 792 (SPEKKQELVE) show a composition bias toward basic and acidic residues. Phosphoserine occurs at positions 808 and 815. The interaction with STAC2 stretch occupies residues 829 to 876 (NENEDKSPYPNPETTGEEDEEEPEMPVGPRPRPLSELHLKEKAVPMPE). Residues 843–852 (TGEEDEEEPE) are compositionally biased toward acidic residues. The stretch at 887 to 1189 (NRFRLQCHRI…IFVGFVIVTF (303 aa)) is one III repeat. The helical transmembrane segment at 901–919 (IFTNLILFFILLSSISLAA) threads the bilayer. Residues 920-931 (EDPVQHTSFRNH) are Extracellular-facing. Residues 932-952 (ILFYFDIVFTTIFTIEIALKI) traverse the membrane as a helical segment. The Cytoplasmic portion of the chain corresponds to 953 to 987 (LGNADYVFTSIFTLEIILKMTAYGAFLHKGSFCRN). The chain crosses the membrane as a helical span at residues 988 to 1006 (YFNILDLLVVSVSLISFGI). Over 1007–1013 (QSSAINV) the chain is Extracellular. The helical transmembrane segment at 1014-1032 (VKILRVLRVLRPLRAINRA) threads the bilayer. The Cytoplasmic segment spans residues 1033 to 1051 (KGLKHVVQCVFVAIRTIGN). The helical transmembrane segment at 1052–1071 (IVIVTTLLQFMFACIGVQLF) threads the bilayer. At 1072-1121 (KGKLYTCSDSSKQTEAECKGNYITYKDGEVDHPIIQPRSWENSKFDFDNV) the chain is on the extracellular side. Cysteine 1078 and cysteine 1089 are joined by a disulfide. The dihydropyridine binding stretch occupies residues 1109–1198 (RSWENSKFDF…FQEQGEQEYK (90 aa)). An intramembrane region (pore-forming) is located at residues 1122 to 1142 (LAAMMALFTVSTFEGWPELLY). The Selectivity filter of repeat III motif lies at 1133-1136 (TFEG). Ca(2+) is bound at residue glutamate 1135. Residues 1143–1159 (RSIDSHTEDKGPIYNYR) lie on the Extracellular side of the membrane. A helical membrane pass occupies residues 1160-1181 (VEISIFFIIYIIIIAFFMMNIF). Residues 1182–1239 (VGFVIVTFQEQGEQEYKNCELDKNQRQCVEYALKARPLRRYIPKNQHQYKVWYVVNST) are Cytoplasmic-facing. Residues 1226–1527 (NQHQYKVWYV…LFVAVIMDNF (302 aa)) form an IV repeat. A helical membrane pass occupies residues 1240–1261 (YFEYLMFVLILLNTICLAMQHY). At 1262–1269 (GQSCLFKI) the chain is on the extracellular side. Residues 1270 to 1291 (AMNILNMLFTGLFTVEMILKLI) form a helical membrane-spanning segment. At 1292–1301 (AFKPKGYFSD) the chain is on the cytoplasmic side. The helical transmembrane segment at 1302–1321 (PWNVFDFLIVIGSIIDVILS) threads the bilayer. Over 1322 to 1372 (ETNHYFCDAWNTFDALIVVGSIVDIAITEVNPAEHTQCSPSMNAEENSRIS) the chain is Extracellular. A helical membrane pass occupies residues 1373–1391 (ITFFRLFRVMRLVKLLSRG). Over 1392–1409 (EGIRTLLWTFIKSFQALP) the chain is Cytoplasmic. The helical transmembrane segment at 1410-1430 (YVALLIVMLFFIYAVIGMQVF) threads the bilayer. The Extracellular portion of the chain corresponds to 1431–1452 (GKIALNDTTEINRNNNFQTFPQ). Residue asparagine 1436 is glycosylated (N-linked (GlcNAc...) asparagine). Positions 1453 to 1471 (AVLLLFRCATGEAWQDIML) form an intramembrane region, pore-forming. Positions 1462–1465 (TGEA) match the Selectivity filter of repeat IV motif. Over 1472–1499 (ACMPGKKCAPESEPSNSTEGETPCGSSF) the chain is Extracellular. Residues 1478–1546 (KCAPESEPSN…LGPHHLDEFK (69 aa)) are dihydropyridine binding. Cysteine 1479 and cysteine 1495 are joined by a disulfide. Asparagine 1487 is a glycosylation site (N-linked (GlcNAc...) asparagine). A phenylalkylamine binding region spans residues 1492-1534 (ETPCGSSFAVFYFISFYMLCAFLIINLFVAVIMDNFDYLTRDW). Residues 1500–1524 (AVFYFISFYMLCAFLIINLFVAVIM) traverse the membrane as a helical segment. The Cytoplasmic segment spans residues 1525–2221 (DNFDYLTRDW…QDSRVYVSSL (697 aa)). Residues 1659–1686 (DEVTVGKFYATFLIQEYFRKFKKRKEQG) form an important for interaction with STAC1, STAC2 and STAC3 region. The segment at 1665 to 1685 (KFYATFLIQEYFRKFKKRKEQ) is calmodulin-binding IQ region. The interval 1699–1718 (LQAGLRTLHDIGPEIRRAIS) is important for localization in at the junctional membrane. Serine 1718 and serine 1739 each carry phosphoserine. A disordered region spans residues 1778 to 1847 (INKAGSSQGD…TVEGHGPPLS (70 aa)). Positions 1799–1811 (STFTPSSYSSTGS) are enriched in polar residues. Low complexity predominate over residues 1812–1822 (NANINNANNTA). Serine 1981 is modified (phosphoserine; by PKA). Disordered stretches follow at residues 2029 to 2063 (ASFP…VESS) and 2186 to 2221 (AGQD…VSSL).

The protein belongs to the calcium channel alpha-1 subunit (TC 1.A.1.11) family. CACNA1C subfamily. Component of a calcium channel complex consisting of a pore-forming alpha subunit (CACNA1C) and ancillary beta, gamma and delta subunits. The channel complex contains alpha, beta, gamma and delta subunits in a 1:1:1:1 ratio, i.e. it contains only one of each type of subunit. CACNA1C channel activity is modulated by ancillary subunits, such as CACNB1, CACNB2, CACNB3, CACNA2D1 and CACNA2D4. Interacts with the gamma subunits CACNG4, CACNG6, CACNG7 and CACNG8. Interacts with CACNB1. Interacts with CACNB2. Identified in a complex with CACNA2D4 and CACNB3. Interacts with CACNB3. Interacts with CACNA2D1. Interacts with CACNA2D4. Interacts with CALM1. Interacts (via the N-terminus and the C-terminal C and IQ motifs) with CABP1; this inhibits Ca(2+)-dependent channel inactivation. The binding via the C motif is calcium independent whereas the binding via IQ requires the presence of calcium and is mutually exclusive with calmodulin binding. The binding to the cytoplasmic N-terminal domain is calcium independent but is essential for the channel modulation. Interacts (via C-terminal CDB motif) with CABP5; in a calcium-dependent manner. Interacts with CIB1; the interaction increases upon cardiomyocytes hypertrophy. Interacts with STAC2 and STAC3; this inhibits channel inactivation. In terms of assembly, (Microbial infection) Interacts with influenzavirus H1 hemagglutinin. Phosphorylation by PKA at Ser-1981 activates the channel. Elevated levels of blood glucose lead to increased phosphorylation by PKA. As to expression, detected throughout the brain, including hippocampus, cerebellum and amygdala, throughout the heart and vascular system, including ductus arteriosus, in urinary bladder, and in retina and sclera in the eye. Expressed in brain, heart, jejunum, ovary, pancreatic beta-cells and vascular smooth muscle. Overall expression is reduced in atherosclerotic vascular smooth muscle.

It is found in the cell membrane. Its subcellular location is the sarcolemma. It localises to the perikaryon. The protein localises to the postsynaptic density membrane. The protein resides in the cell projection. It is found in the dendrite. Its subcellular location is the T-tubule. It catalyses the reaction Ca(2+)(in) = Ca(2+)(out). Inhibited by dihydropyridines (DHP), such as isradipine. Inhibited by nifedipine. Channel activity is regulated by Ca(2+) and calmodulin. Binding of STAC1, STAC2 or STAC3 to a region that overlaps with the calmodulin binding site inhibits channel inactivation by Ca(2+) and calmodulin. Binding of calmodulin or CABP1 at the same regulatory sites results in opposite effects on the channel function. Shear stress and pressure increases calcium channel activity. Its function is as follows. Pore-forming, alpha-1C subunit of the voltage-gated calcium channel that gives rise to L-type calcium currents. Mediates influx of calcium ions into the cytoplasm, and thereby triggers calcium release from the sarcoplasm. Plays an important role in excitation-contraction coupling in the heart. Required for normal heart development and normal regulation of heart rhythm. Required for normal contraction of smooth muscle cells in blood vessels and in the intestine. Essential for normal blood pressure regulation via its role in the contraction of arterial smooth muscle cells. Long-lasting (L-type) calcium channels belong to the 'high-voltage activated' (HVA) group. In terms of biological role, pore-forming, alpha-1C subunit of the voltage-gated calcium channel that gives rise to L-type calcium currents. Functionally, (Microbial infection) Acts as a receptor for Influenzavirus. May play a critical role in allowing virus entry when sialylated and expressed on lung tissues. This chain is Voltage-dependent L-type calcium channel subunit alpha-1C (CACNA1C), found in Homo sapiens (Human).